The chain runs to 206 residues: Pyridoxal 5'-phosphate synthase subunit PdxT (206 aa).

59 to 61 (GES) contributes to the L-glutamine binding site. Residue Cys91 is the Nucleophile of the active site. L-glutamine is bound by residues Arg123 and 151 to 152 (IR). Catalysis depends on charge relay system residues His187 and Glu189.

This sequence belongs to the glutaminase PdxT/SNO family. In the presence of PdxS, forms a dodecamer of heterodimers. Only shows activity in the heterodimer.

It carries out the reaction aldehydo-D-ribose 5-phosphate + D-glyceraldehyde 3-phosphate + L-glutamine = pyridoxal 5'-phosphate + L-glutamate + phosphate + 3 H2O + H(+). The enzyme catalyses L-glutamine + H2O = L-glutamate + NH4(+). It functions in the pathway cofactor biosynthesis; pyridoxal 5'-phosphate biosynthesis. Functionally, catalyzes the hydrolysis of glutamine to glutamate and ammonia as part of the biosynthesis of pyridoxal 5'-phosphate. The resulting ammonia molecule is channeled to the active site of PdxS. The protein is Pyridoxal 5'-phosphate synthase subunit PdxT of Mycobacterium sp. (strain JLS).